The sequence spans 212 residues: Large ribosomal subunit protein uL3 (212 aa).

The residue at position 153 (Gln153) is an N5-methylglutamine.

The protein belongs to the universal ribosomal protein uL3 family. As to quaternary structure, part of the 50S ribosomal subunit. Forms a cluster with proteins L14 and L19. Methylated by PrmB.

In terms of biological role, one of the primary rRNA binding proteins, it binds directly near the 3'-end of the 23S rRNA, where it nucleates assembly of the 50S subunit. This Shewanella piezotolerans (strain WP3 / JCM 13877) protein is Large ribosomal subunit protein uL3.